The sequence spans 152 residues: Large ribosomal subunit protein uL13 (152 aa).

The disordered stretch occupies residues 133–152; sequence EHPHQAQKPQPLTINTIPGA. Positions 139-152 are enriched in polar residues; the sequence is QKPQPLTINTIPGA.

This sequence belongs to the universal ribosomal protein uL13 family. Part of the 50S ribosomal subunit.

This protein is one of the early assembly proteins of the 50S ribosomal subunit, although it is not seen to bind rRNA by itself. It is important during the early stages of 50S assembly. This Thermosynechococcus vestitus (strain NIES-2133 / IAM M-273 / BP-1) protein is Large ribosomal subunit protein uL13.